Consider the following 182-residue polypeptide: ATP synthase subunit b (182 aa).

The helical transmembrane segment at 25–45 threads the bilayer; the sequence is VVLAGFAVLFYIVVKFVVPMF.

Belongs to the ATPase B chain family. F-type ATPases have 2 components, F(1) - the catalytic core - and F(0) - the membrane proton channel. F(1) has five subunits: alpha(3), beta(3), gamma(1), delta(1), epsilon(1). F(0) has three main subunits: a(1), b(2) and c(10-14). The alpha and beta chains form an alternating ring which encloses part of the gamma chain. F(1) is attached to F(0) by a central stalk formed by the gamma and epsilon chains, while a peripheral stalk is formed by the delta and b chains.

The protein localises to the cell membrane. In terms of biological role, f(1)F(0) ATP synthase produces ATP from ADP in the presence of a proton or sodium gradient. F-type ATPases consist of two structural domains, F(1) containing the extramembraneous catalytic core and F(0) containing the membrane proton channel, linked together by a central stalk and a peripheral stalk. During catalysis, ATP synthesis in the catalytic domain of F(1) is coupled via a rotary mechanism of the central stalk subunits to proton translocation. Functionally, component of the F(0) channel, it forms part of the peripheral stalk, linking F(1) to F(0). The protein is ATP synthase subunit b of Arthrobacter sp. (strain FB24).